Consider the following 283-residue polypeptide: Pantothenate synthetase (283 aa).

30-37 is an ATP binding site; sequence MGNLHDGH. Catalysis depends on His-37, which acts as the Proton donor. Gln-61 is a (R)-pantoate binding site. A beta-alanine-binding site is contributed by Gln-61. Position 149 to 152 (149 to 152) interacts with ATP; the sequence is GEKD. (R)-pantoate is bound at residue Gln-155. Residues Met-178 and 186 to 189 contribute to the ATP site; that span reads LSSR.

It belongs to the pantothenate synthetase family. Homodimer.

Its subcellular location is the cytoplasm. It catalyses the reaction (R)-pantoate + beta-alanine + ATP = (R)-pantothenate + AMP + diphosphate + H(+). Its pathway is cofactor biosynthesis; (R)-pantothenate biosynthesis; (R)-pantothenate from (R)-pantoate and beta-alanine: step 1/1. With respect to regulation, activation requires a combination of a divalent cation, magnesium or manganese, and a monovalent cation, potassium or ammonium. Above the optimum concentration for activation, magnesium and manganese are rather inhibitory. Also activated by 2-mercaptoethanol, dithiothreitol, cysteine and glutathione. Inhibited by divalent cations (mercury, cobalt, zinc, copper, silver), chelating agents (EDTA, EGTA and o-phenanthroline), and analogs of beta-alanine (taurine, gamma-aminobutyrate, gamma-amino-beta-hydroxybutyrate). Functionally, catalyzes the condensation of pantoate with beta-alanine in an ATP-dependent reaction via a pantoyl-adenylate intermediate. The chain is Pantothenate synthetase (panC) from Escherichia coli (strain K12).